The primary structure comprises 330 residues: Ketol-acid reductoisomerase (NADP(+)) (330 aa).

The KARI N-terminal Rossmann domain maps to 1–181 (MNVYYEQDAD…GGAKAGVIET (181 aa)). NADP(+) is bound by residues 24–27 (YGSQ), Arg47, Ser50, Ser52, and 82–85 (DQYQ). His107 is an active-site residue. Position 133 (Gly133) interacts with NADP(+). One can recognise a KARI C-terminal knotted domain in the interval 182–327 (TIKDETETDL…AKLRNMMSWL (146 aa)). Mg(2+) contacts are provided by Asp190, Glu194, Glu226, and Glu230. Residue Ser251 coordinates substrate.

It belongs to the ketol-acid reductoisomerase family. The cofactor is Mg(2+).

The enzyme catalyses (2R)-2,3-dihydroxy-3-methylbutanoate + NADP(+) = (2S)-2-acetolactate + NADPH + H(+). It carries out the reaction (2R,3R)-2,3-dihydroxy-3-methylpentanoate + NADP(+) = (S)-2-ethyl-2-hydroxy-3-oxobutanoate + NADPH + H(+). It participates in amino-acid biosynthesis; L-isoleucine biosynthesis; L-isoleucine from 2-oxobutanoate: step 2/4. Its pathway is amino-acid biosynthesis; L-valine biosynthesis; L-valine from pyruvate: step 2/4. Functionally, involved in the biosynthesis of branched-chain amino acids (BCAA). Catalyzes an alkyl-migration followed by a ketol-acid reduction of (S)-2-acetolactate (S2AL) to yield (R)-2,3-dihydroxy-isovalerate. In the isomerase reaction, S2AL is rearranged via a Mg-dependent methyl migration to produce 3-hydroxy-3-methyl-2-ketobutyrate (HMKB). In the reductase reaction, this 2-ketoacid undergoes a metal-dependent reduction by NADPH to yield (R)-2,3-dihydroxy-isovalerate. This is Ketol-acid reductoisomerase (NADP(+)) from Prosthecochloris aestuarii (strain DSM 271 / SK 413).